The primary structure comprises 321 residues: tRNA-dihydrouridine synthase B (321 aa).

Residues 16 to 18 and Gln70 each bind FMN; that span reads PMA. Cys100 functions as the Proton donor in the catalytic mechanism. FMN is bound by residues Lys139, 200 to 202, and 224 to 225; these read NGD and GR.

It belongs to the Dus family. DusB subfamily. FMN is required as a cofactor.

The catalysed reaction is a 5,6-dihydrouridine in tRNA + NAD(+) = a uridine in tRNA + NADH + H(+). It catalyses the reaction a 5,6-dihydrouridine in tRNA + NADP(+) = a uridine in tRNA + NADPH + H(+). Catalyzes the synthesis of 5,6-dihydrouridine (D), a modified base found in the D-loop of most tRNAs, via the reduction of the C5-C6 double bond in target uridines. The polypeptide is tRNA-dihydrouridine synthase B (Klebsiella pneumoniae).